The following is a 232-amino-acid chain: MTIDLAKVKIEDSWKEVLKDEFLSSYFLEIKFNLINALKNGKVYPPSNLIFNAFNLTPFDKVKVVILGQDPYHNEGEAMGLSFSVPKGVRVPPSLANIYKEIKDDLGIIEPNCGDLSYWAKQGVLLLNATLSVGARMANSHSNFGWQIFSDAVIKNISEKKTGVVFMLWGNYARAKANLIEANKHLVLTAAHPSPLARGAFFGSRHFSKCNNYLIKNGQTPIDWDLNNYTLN.

Asp70 acts as the Proton acceptor in catalysis.

It belongs to the uracil-DNA glycosylase (UDG) superfamily. UNG family.

It localises to the cytoplasm. The catalysed reaction is Hydrolyzes single-stranded DNA or mismatched double-stranded DNA and polynucleotides, releasing free uracil.. Its function is as follows. Excises uracil residues from the DNA which can arise as a result of misincorporation of dUMP residues by DNA polymerase or due to deamination of cytosine. In Campylobacter fetus subsp. fetus (strain 82-40), this protein is Uracil-DNA glycosylase.